Reading from the N-terminus, the 488-residue chain is ATP synthase subunit beta (488 aa).

164 to 171 (GGAGVGKT) serves as a coordination point for ATP.

The protein belongs to the ATPase alpha/beta chains family. As to quaternary structure, F-type ATPases have 2 components, CF(1) - the catalytic core - and CF(0) - the membrane proton channel. CF(1) has five subunits: alpha(3), beta(3), gamma(1), delta(1), epsilon(1). CF(0) has four main subunits: a(1), b(1), b'(1) and c(9-12).

The protein localises to the cellular thylakoid membrane. It catalyses the reaction ATP + H2O + 4 H(+)(in) = ADP + phosphate + 5 H(+)(out). Its function is as follows. Produces ATP from ADP in the presence of a proton gradient across the membrane. The catalytic sites are hosted primarily by the beta subunits. This Prochlorococcus marinus (strain MIT 9211) protein is ATP synthase subunit beta.